The chain runs to 146 residues: Large ribosomal subunit protein uL15 (146 aa).

The interval 1-54 (MNLTDLRPADGSKQSGNFRRGRGHGSGNGKTAGKGHKGQKARSGAPRVGFEGGQ) is disordered.

The protein belongs to the universal ribosomal protein uL15 family. Part of the 50S ribosomal subunit.

In terms of biological role, binds to the 23S rRNA. In Lachnoclostridium phytofermentans (strain ATCC 700394 / DSM 18823 / ISDg) (Clostridium phytofermentans), this protein is Large ribosomal subunit protein uL15.